A 361-amino-acid polypeptide reads, in one-letter code: Cyclin-dependent kinase 10 (361 aa).

One can recognise a Protein kinase domain in the interval Phe-37–Phe-321. Residues Ile-43–Val-51 and Lys-66 each bind ATP. Catalysis depends on Asp-161, which acts as the Proton acceptor. A Phosphothreonine modification is found at Thr-194. The interval Leu-332–Pro-361 is disordered.

This sequence belongs to the protein kinase superfamily. CMGC Ser/Thr protein kinase family. CDC2/CDKX subfamily. Heterodimer with CCNQ, the interaction is required for kinase activity. Interacts with ETS2. Interacts with PRK2.

The protein resides in the cytoplasm. Its subcellular location is the cytoskeleton. The protein localises to the cilium basal body. It carries out the reaction L-seryl-[protein] + ATP = O-phospho-L-seryl-[protein] + ADP + H(+). The catalysed reaction is L-threonyl-[protein] + ATP = O-phospho-L-threonyl-[protein] + ADP + H(+). Its function is as follows. Cyclin-dependent kinase that phosphorylates the transcription factor ETS2 (in vitro) and positively controls its proteasomal degradation (in cells). Involved in the regulation of actin cytoskeleton organization through the phosphorylation of actin dynamics regulators such as PKN2. Is a negative regulator of ciliogenesis through phosphorylation of PKN2 and promotion of RhoA signaling. This is Cyclin-dependent kinase 10 (CDK10) from Bos taurus (Bovine).